A 157-amino-acid chain; its full sequence is 2-C-methyl-D-erythritol 2,4-cyclodiphosphate synthase (157 aa).

2 residues coordinate a divalent metal cation: Asp-9 and His-11. 4-CDP-2-C-methyl-D-erythritol 2-phosphate is bound by residues 9–11 and 35–36; these read DVH and HS. His-43 contributes to the a divalent metal cation binding site. Residues 57-59, 62-66, 101-107, 133-136, Phe-140, and Arg-143 each bind 4-CDP-2-C-methyl-D-erythritol 2-phosphate; these read DIG, FPDTD, AEKPKMA, and TTTE.

It belongs to the IspF family. In terms of assembly, homotrimer. Requires a divalent metal cation as cofactor.

It catalyses the reaction 4-CDP-2-C-methyl-D-erythritol 2-phosphate = 2-C-methyl-D-erythritol 2,4-cyclic diphosphate + CMP. It participates in isoprenoid biosynthesis; isopentenyl diphosphate biosynthesis via DXP pathway; isopentenyl diphosphate from 1-deoxy-D-xylulose 5-phosphate: step 4/6. Its function is as follows. Involved in the biosynthesis of isopentenyl diphosphate (IPP) and dimethylallyl diphosphate (DMAPP), two major building blocks of isoprenoid compounds. Catalyzes the conversion of 4-diphosphocytidyl-2-C-methyl-D-erythritol 2-phosphate (CDP-ME2P) to 2-C-methyl-D-erythritol 2,4-cyclodiphosphate (ME-CPP) with a corresponding release of cytidine 5-monophosphate (CMP). The protein is 2-C-methyl-D-erythritol 2,4-cyclodiphosphate synthase of Listeria innocua serovar 6a (strain ATCC BAA-680 / CLIP 11262).